The chain runs to 127 residues: Fluoride-specific ion channel FluC (127 aa).

Transmembrane regions (helical) follow at residues 4-24 (LLLAVFIGGGTGSVARWLLSM), 35-55 (LGTLAANLIGAFIIGMGFAWF), 71-91 (TGFCGGLTTFSTFSAEVVFLL), and 103-123 (VFVNLLGSFAMTALAFWLFSA). Na(+)-binding residues include glycine 75 and threonine 78.

Belongs to the fluoride channel Fluc/FEX (TC 1.A.43) family.

Its subcellular location is the cell inner membrane. The catalysed reaction is fluoride(in) = fluoride(out). With respect to regulation, na(+) is not transported, but it plays an essential structural role and its presence is essential for fluoride channel function. Its function is as follows. Fluoride-specific ion channel. Important for reducing fluoride concentration in the cell, thus reducing its toxicity. The polypeptide is Fluoride-specific ion channel FluC (Escherichia coli O8 (strain IAI1)).